A 123-amino-acid chain; its full sequence is Small ribosomal subunit protein uS12c (123 aa).

This sequence belongs to the universal ribosomal protein uS12 family. Part of the 30S ribosomal subunit.

It is found in the plastid. Its subcellular location is the chloroplast. Functionally, with S4 and S5 plays an important role in translational accuracy. Located at the interface of the 30S and 50S subunits. This is Small ribosomal subunit protein uS12c (rps12) from Anthoceros angustus (Hornwort).